The sequence spans 154 residues: Ribosome maturation factor RimP (154 aa).

Belongs to the RimP family.

It is found in the cytoplasm. Its function is as follows. Required for maturation of 30S ribosomal subunits. In Clostridium perfringens (strain ATCC 13124 / DSM 756 / JCM 1290 / NCIMB 6125 / NCTC 8237 / Type A), this protein is Ribosome maturation factor RimP.